Here is a 386-residue protein sequence, read N- to C-terminus: ATP phosphoribosyltransferase regulatory subunit (386 aa).

It belongs to the class-II aminoacyl-tRNA synthetase family. HisZ subfamily. Heteromultimer composed of HisG and HisZ subunits.

The protein localises to the cytoplasm. The protein operates within amino-acid biosynthesis; L-histidine biosynthesis; L-histidine from 5-phospho-alpha-D-ribose 1-diphosphate: step 1/9. In terms of biological role, required for the first step of histidine biosynthesis. May allow the feedback regulation of ATP phosphoribosyltransferase activity by histidine. The sequence is that of ATP phosphoribosyltransferase regulatory subunit from Variovorax paradoxus (strain S110).